The primary structure comprises 459 residues: 1,3-beta-glucanosyltransferase gas2 (459 aa).

A signal peptide spans methionine 1–alanine 19. Residues asparagine 34 and asparagine 68 are each glycosylated (N-linked (GlcNAc...) asparagine). The cysteines at positions 69 and 98 are disulfide-linked. Tyrosine 87 provides a ligand contact to (1,3-beta-D-glucosyl)n. 3 N-linked (GlcNAc...) asparagine glycosylation sites follow: asparagine 90, asparagine 104, and asparagine 146. Residues asparagine 155 and glutamate 156 each contribute to the (1,3-beta-D-glucosyl)n site. Residue glutamate 156 is the Proton donor of the active site. N-linked (GlcNAc...) asparagine glycosylation is present at asparagine 160. (1,3-beta-D-glucosyl)n is bound by residues aspartate 197 and arginine 202. 2 disulfides stabilise this stretch: cysteine 211/cysteine 350 and cysteine 235/cysteine 266. N-linked (GlcNAc...) asparagine glycosylation is found at asparagine 212, asparagine 218, and asparagine 254. The active-site Nucleophile is the glutamate 263. Residue asparagine 284 is glycosylated (N-linked (GlcNAc...) asparagine). Tyrosine 295 is a (1,3-beta-D-glucosyl)n binding site. Asparagine 308, asparagine 334, asparagine 344, asparagine 354, and asparagine 370 each carry an N-linked (GlcNAc...) asparagine glycan. Intrachain disulfides connect cysteine 374/cysteine 427, cysteine 383/cysteine 449, and cysteine 402/cysteine 409. N-linked (GlcNAc...) asparagine glycosylation is present at asparagine 423.

It belongs to the glycosyl hydrolase 72 family.

The protein localises to the endoplasmic reticulum lumen. It localises to the secreted. Its function is as follows. Splits internally a 1,3-beta-glucan molecule and transfers the newly generated reducing end (the donor) to the non-reducing end of another 1,3-beta-glucan molecule (the acceptor) forming a 1,3-beta linkage, resulting in the elongation of 1,3-beta-glucan chains in the cell wall. This chain is 1,3-beta-glucanosyltransferase gas2 (gas2), found in Schizosaccharomyces pombe (strain 972 / ATCC 24843) (Fission yeast).